A 469-amino-acid chain; its full sequence is Phosphoenolpyruvate carboxylase (469 aa).

This sequence belongs to the PEPCase type 2 family. As to quaternary structure, homotetramer. Mg(2+) is required as a cofactor.

The enzyme catalyses oxaloacetate + phosphate = phosphoenolpyruvate + hydrogencarbonate. Catalyzes the irreversible beta-carboxylation of phosphoenolpyruvate (PEP) to form oxaloacetate (OAA), a four-carbon dicarboxylic acid source for the tricarboxylic acid cycle. This chain is Phosphoenolpyruvate carboxylase, found in Pyrococcus horikoshii (strain ATCC 700860 / DSM 12428 / JCM 9974 / NBRC 100139 / OT-3).